The sequence spans 106 residues: Large ribosomal subunit protein bL21 (106 aa).

The protein belongs to the bacterial ribosomal protein bL21 family. Part of the 50S ribosomal subunit. Contacts protein L20.

Functionally, this protein binds to 23S rRNA in the presence of protein L20. This Chlamydia abortus (strain DSM 27085 / S26/3) (Chlamydophila abortus) protein is Large ribosomal subunit protein bL21.